The sequence spans 77 residues: Sec-independent protein translocase protein TatA (77 aa).

The chain crosses the membrane as a helical span at residues 1-21; sequence MGSFSIWHWLIVLVIVMLVFG. The interval 50–77 is disordered; that stretch reads ADASTQQKISGGQTLEGEAREKVEKTHS. A compositionally biased stretch (polar residues) spans 53 to 62; that stretch reads STQQKISGGQ. Residues 66–77 are compositionally biased toward basic and acidic residues; sequence GEAREKVEKTHS.

It belongs to the TatA/E family. In terms of assembly, the Tat system comprises two distinct complexes: a TatABC complex, containing multiple copies of TatA, TatB and TatC subunits, and a separate TatA complex, containing only TatA subunits. Substrates initially bind to the TatABC complex, which probably triggers association of the separate TatA complex to form the active translocon.

It is found in the cell inner membrane. Functionally, part of the twin-arginine translocation (Tat) system that transports large folded proteins containing a characteristic twin-arginine motif in their signal peptide across membranes. TatA could form the protein-conducting channel of the Tat system. This chain is Sec-independent protein translocase protein TatA, found in Azoarcus sp. (strain BH72).